Reading from the N-terminus, the 91-residue chain is Small ribosomal subunit protein uS19 (91 aa).

The protein belongs to the universal ribosomal protein uS19 family.

In terms of biological role, protein S19 forms a complex with S13 that binds strongly to the 16S ribosomal RNA. This is Small ribosomal subunit protein uS19 from Synechococcus sp. (strain CC9605).